The chain runs to 158 residues: 3-hydroxyacyl-[acyl-carrier-protein] dehydratase FabZ (158 aa).

H62 is an active-site residue.

Belongs to the thioester dehydratase family. FabZ subfamily.

The protein resides in the cytoplasm. The enzyme catalyses a (3R)-hydroxyacyl-[ACP] = a (2E)-enoyl-[ACP] + H2O. Involved in unsaturated fatty acids biosynthesis. Catalyzes the dehydration of short chain beta-hydroxyacyl-ACPs and long chain saturated and unsaturated beta-hydroxyacyl-ACPs. This chain is 3-hydroxyacyl-[acyl-carrier-protein] dehydratase FabZ, found in Novosphingobium aromaticivorans (strain ATCC 700278 / DSM 12444 / CCUG 56034 / CIP 105152 / NBRC 16084 / F199).